The primary structure comprises 311 residues: Phospholipid phosphatase 3 (311 aa).

The Cytoplasmic segment spans residues 1-33 (MQNYKYDKAIVAESKNGGSPALNNNPRKGGSKR). The residue at position 19 (S19) is a Phosphoserine. A helical transmembrane segment spans residues 34–54 (VLLICLDLFCLFMAGLPFIII). The Extracellular segment spans residues 55 to 85 (ETSTIKPYHRGFYCNDESIKYPQKTGETIND). Residues 86 to 106 (AVLTAVGIVIAILAIITGEFY) traverse the membrane as a helical segment. Residues 107–123 (RIYYLKEKSRSTIQNPY) lie on the Cytoplasmic side of the membrane. The Dityrosine basolateral targeting motif motif lies at 109–110 (YY). The chain crosses the membrane as a helical span at residues 124–144 (VAALYKQVGCFLFGCAISQSF). Residues 145-194 (TDIAKVSIGRLRPHFLNVCNPDFSQINCSVGYIQNYRCRGEDSKVQEARK) lie on the Extracellular side of the membrane. The tract at residues 149–157 (KVSIGRLRP) is phosphatase sequence motif I. N-linked (GlcNAc...) asparagine glycosylation occurs at N171. Residues 183–185 (RGE) carry the Integrin-binding motif motif. A helical membrane pass occupies residues 195–215 (SFFSGHASFSMYTMLYLVLYL). A phosphatase sequence motif II region spans residues 197–200 (FSGH). H200 (proton donors) is an active-site residue. Residues 216-226 (QARFTWRGARL) lie on the Cytoplasmic side of the membrane. The helical transmembrane segment at 227-244 (LRPLLQFTLIMMAFYTGL) threads the bilayer. Residues 245–256 (SRVSDHKHHPSD) form a phosphatase sequence motif III region. The Extracellular portion of the chain corresponds to 245–258 (SRVSDHKHHPSDVL). The Nucleophile role is filled by H252. Residues 259-279 (AGFAQGALVACCIVFFVSDLF) traverse the membrane as a helical segment. Positions 276–311 (SDLFKTKTTLSLPPSAIRKDMLSPVDIDRSNHHNMV) are mediates interaction with CTNND1. The Cytoplasmic portion of the chain corresponds to 280 to 311 (KTKTTLSLPPSAIRKDMLSPVDIDRSNHHNMV).

Belongs to the PA-phosphatase related phosphoesterase family. In terms of assembly, forms functional homodimers and homooligomers that are not required for substrate recognition and catalytic activity. Can also form heterooligomers with other PLPP2 and PLPP3. Interacts with CTNND1; negatively regulates the PLPP3-mediated stabilization of beta-catenin/CTNNB1. In terms of processing, N-glycosylated. Contains high-mannose oligosaccharides.

The protein localises to the cell membrane. It is found in the basolateral cell membrane. It localises to the endoplasmic reticulum membrane. The protein resides in the endoplasmic reticulum-Golgi intermediate compartment membrane. Its subcellular location is the golgi apparatus membrane. The protein localises to the golgi apparatus. It is found in the trans-Golgi network membrane. It localises to the membrane raft. It carries out the reaction a 1,2-diacyl-sn-glycero-3-phosphate + H2O = a 1,2-diacyl-sn-glycerol + phosphate. The catalysed reaction is 1,2-dihexadecanoyl-sn-glycero-3-phosphate + H2O = 1,2-dihexadecanoyl-sn-glycerol + phosphate. The enzyme catalyses 1,2-di-(9Z-octadecenoyl)-sn-glycero-3-phosphate + H2O = 1,2-di-(9Z-octadecenoyl)-sn-glycerol + phosphate. It catalyses the reaction a monoacyl-sn-glycero-3-phosphate + H2O = a monoacylglycerol + phosphate. It carries out the reaction (9Z)-octadecenoyl-sn-glycero-3-phosphate + H2O = (9Z-octadecenoyl)-glycerol + phosphate. The catalysed reaction is sphing-4-enine 1-phosphate + H2O = sphing-4-enine + phosphate. The enzyme catalyses an N-acylsphing-4-enine 1-phosphate + H2O = an N-acylsphing-4-enine + phosphate. It catalyses the reaction N-(octanoyl)-sphing-4-enine-1-phosphate + H2O = N-octanoylsphing-4-enine + phosphate. It carries out the reaction N-(9Z-octadecenoyl)-ethanolamine phosphate + H2O = N-(9Z-octadecenoyl) ethanolamine + phosphate. It functions in the pathway lipid metabolism; phospholipid metabolism. Magnesium-independent phospholipid phosphatase. Insensitive to N-ethylmaleimide. Inhibited by sphingosine, zinc ions and modestly by propanolol. Its function is as follows. Magnesium-independent phospholipid phosphatase of the plasma membrane that catalyzes the dephosphorylation of a variety of glycerolipid and sphingolipid phosphate esters including phosphatidate/PA, lysophosphatidate/LPA, diacylglycerol pyrophosphate/DGPP, sphingosine 1-phosphate/S1P and ceramide 1-phosphate/C1P. Also acts on N-oleoyl ethanolamine phosphate/N-(9Z-octadecenoyl)-ethanolamine phosphate, a potential physiological compound. Has both an extracellular and an intracellular phosphatase activity, allowing the hydrolysis and the cellular uptake of these bioactive lipid mediators from the milieu, regulating signal transduction in different cellular processes. Through the dephosphorylation of extracellular sphingosine-1-phosphate and the regulation of its extra- and intracellular availability, plays a role in vascular homeostasis, regulating endothelial cell migration, adhesion, survival, proliferation and the production of pro-inflammatory cytokines. By maintaining the appropriate levels of this lipid in the cerebellum, also ensure its proper development and function. Through its intracellular lipid phosphatase activity may act in early compartments of the secretory pathway, regulating the formation of Golgi to endoplasmic reticulum retrograde transport carriers. Functionally, independently of this phosphatase activity may also function in the Wnt signaling pathway and the stabilization of beta-catenin/CTNNB1, thereby regulating cell proliferation, migration and differentiation in angiogenesis or yet in tumor growth. Also plays a role in integrin-mediated cell-cell adhesion in angiogenesis. This is Phospholipid phosphatase 3 from Bos taurus (Bovine).